Reading from the N-terminus, the 227-residue chain is Orotate phosphoribosyltransferase (227 aa).

5-phospho-alpha-D-ribose 1-diphosphate-binding residues include Lys-51, Arg-119, Lys-120, and Lys-123. Thr-149 and Arg-177 together coordinate orotate.

The protein belongs to the purine/pyrimidine phosphoribosyltransferase family. PyrE subfamily. As to quaternary structure, homodimer. Expressed in body wall muscles, spermatheca and vulva muscles.

The enzyme catalyses orotidine 5'-phosphate + diphosphate = orotate + 5-phospho-alpha-D-ribose 1-diphosphate. It carries out the reaction UMP + diphosphate = 5-phospho-alpha-D-ribose 1-diphosphate + uracil. The protein operates within pyrimidine metabolism; UMP biosynthesis via de novo pathway; UMP from orotate: step 1/2. Its pathway is pyrimidine metabolism; UMP biosynthesis via salvage pathway; UMP from uracil: step 1/1. Phosphoribosyltransferase which catalyzes the formation of UMP from uracil in vitro and thus may be involved in UMP biosynthesis via the salvage pathway. May also participate in the first step of UMP synthesis by catalyzing the formation of orotidine 5'-phosphate, a UMP precursor, from orotate. This chain is Orotate phosphoribosyltransferase, found in Caenorhabditis elegans.